Reading from the N-terminus, the 279-residue chain is Aldo-keto reductase Mvan_2161 (279 aa).

Tyrosine 54 acts as the Proton donor in catalysis. Positions 194, 196, 232, 234, 235, 240, 243, 244, and 270 each coordinate NADPH.

This sequence belongs to the aldo/keto reductase family.

The sequence is that of Aldo-keto reductase Mvan_2161 from Mycolicibacterium vanbaalenii (strain DSM 7251 / JCM 13017 / BCRC 16820 / KCTC 9966 / NRRL B-24157 / PYR-1) (Mycobacterium vanbaalenii).